A 389-amino-acid chain; its full sequence is Succinate--CoA ligase [ADP-forming] subunit beta (389 aa).

ATP contacts are provided by residues K46, 53–55 (GRG), E99, C102, and E107. Mg(2+)-binding residues include N199 and D213. Residues N264 and 321–323 (GIV) each bind substrate.

Belongs to the succinate/malate CoA ligase beta subunit family. As to quaternary structure, heterotetramer of two alpha and two beta subunits. It depends on Mg(2+) as a cofactor.

It carries out the reaction succinate + ATP + CoA = succinyl-CoA + ADP + phosphate. The catalysed reaction is GTP + succinate + CoA = succinyl-CoA + GDP + phosphate. Its pathway is carbohydrate metabolism; tricarboxylic acid cycle; succinate from succinyl-CoA (ligase route): step 1/1. Its function is as follows. Succinyl-CoA synthetase functions in the citric acid cycle (TCA), coupling the hydrolysis of succinyl-CoA to the synthesis of either ATP or GTP and thus represents the only step of substrate-level phosphorylation in the TCA. The beta subunit provides nucleotide specificity of the enzyme and binds the substrate succinate, while the binding sites for coenzyme A and phosphate are found in the alpha subunit. The polypeptide is Succinate--CoA ligase [ADP-forming] subunit beta (Haemophilus influenzae (strain 86-028NP)).